The chain runs to 458 residues: Adenylosuccinate synthetase (458 aa).

GTP-binding positions include 17–23 and 45–47; these read GDEGKGK and GHT. Asp-18 acts as the Proton acceptor in catalysis. 2 residues coordinate Mg(2+): Asp-18 and Gly-45. Residues 18-21, 43-46, Thr-137, Arg-151, Gln-247, Thr-262, and Arg-330 contribute to the IMP site; these read DEGK and NAGH. His-46 serves as the catalytic Proton donor. 326–332 serves as a coordination point for substrate; that stretch reads VTTGRSR. GTP contacts are provided by residues Arg-332, 358-360, and 440-442; these read KLD and STS.

It belongs to the adenylosuccinate synthetase family. Homodimer. Requires Mg(2+) as cofactor.

Its subcellular location is the cytoplasm. It catalyses the reaction IMP + L-aspartate + GTP = N(6)-(1,2-dicarboxyethyl)-AMP + GDP + phosphate + 2 H(+). Its pathway is purine metabolism; AMP biosynthesis via de novo pathway; AMP from IMP: step 1/2. Functionally, plays an important role in the de novo pathway of purine nucleotide biosynthesis. Catalyzes the first committed step in the biosynthesis of AMP from IMP. This is Adenylosuccinate synthetase from Acidovorax sp. (strain JS42).